The chain runs to 309 residues: Protein FdhE (309 aa).

It belongs to the FdhE family.

It is found in the cytoplasm. Necessary for formate dehydrogenase activity. The polypeptide is Protein FdhE (Escherichia coli (strain SMS-3-5 / SECEC)).